A 462-amino-acid polypeptide reads, in one-letter code: Argininosuccinate lyase (462 aa).

It belongs to the lyase 1 family. Argininosuccinate lyase subfamily.

It localises to the cytoplasm. The catalysed reaction is 2-(N(omega)-L-arginino)succinate = fumarate + L-arginine. It participates in amino-acid biosynthesis; L-arginine biosynthesis; L-arginine from L-ornithine and carbamoyl phosphate: step 3/3. The polypeptide is Argininosuccinate lyase (Streptococcus agalactiae serotype V (strain ATCC BAA-611 / 2603 V/R)).